The primary structure comprises 161 residues: Pleiotrophin-A (161 aa).

A signal peptide spans 1–23; the sequence is MRHQHGLFMLALLAFLFVITVLG. 5 disulfide bridges follow: C41/C70, C49/C79, C56/C83, C93/C125, and C103/C135. Chondroitin sulfate binding regions lie at residues 86-93 and 117-125; these read KKQFGAEC and KRALHNAEC. The interval 136 to 161 is disordered; the sequence is GKVTKPKLQESKKKKKEGKNKEKLLD. Residues 141–161 are chondroitin sulfate A binding; it reads PKLQESKKKKKEGKNKEKLLD.

It belongs to the pleiotrophin family. In terms of tissue distribution, expressed in high levels in brain and eye. Lower levels in bone. In the tailbud embryo stage, it is expressed exclusively in the central nervous system, especially in the hind region of the brain.

Its subcellular location is the secreted. Functionally, secreted growth factor that mediates its signal through cell-surface proteoglycan and non-proteoglycan receptors. Binds cell-surface proteoglycan receptor via their chondroitin sulfate (CS) groups. Thereby regulates many processes like cell proliferation, cell survival, cell growth, cell differentiation and cell migration. Has antibacterial activity against both Gram-positive and Gram-negative bacteria. The chain is Pleiotrophin-A (ptn-a) from Xenopus laevis (African clawed frog).